Here is a 466-residue protein sequence, read N- to C-terminus: Asparagine--tRNA ligase (466 aa).

The protein belongs to the class-II aminoacyl-tRNA synthetase family. In terms of assembly, homodimer.

The protein localises to the cytoplasm. It carries out the reaction tRNA(Asn) + L-asparagine + ATP = L-asparaginyl-tRNA(Asn) + AMP + diphosphate + H(+). The protein is Asparagine--tRNA ligase of Escherichia coli O157:H7.